The chain runs to 646 residues: RNase E specificity factor CsrD (646 aa).

2 consecutive transmembrane segments (helical) span residues 10-30 (FVTL…SLSF) and 135-155 (MTTA…FLAV). An HAMP-like region spans residues 152-219 (FLAVRWLQRQ…REQHSRLDTL (68 aa)). Residues 194 to 224 (RTSSALDTLLREIQNAREQHSRLDTLIRSYA) are a coiled coil. Residues 254–387 (THGIVMMIRL…GGNSWAIYDD (134 aa)) enclose the GGDEF domain. Positions 396–644 (NVRWRTLIEQ…TNVKKYSQRY (249 aa)) constitute an EAL domain.

It is found in the cell membrane. Its function is as follows. Serves as a specificity factor required for RNase E-mediated decay of the small global regulatory RNAs CsrB and CsrC, it is probably not a nuclease. Nor does its activity involve c-di-GMP, despite its domain composition. Positively modulates motility gene expression, is also required for curli expression. This Escherichia coli (strain K12) protein is RNase E specificity factor CsrD (csrD).